The sequence spans 426 residues: MSACINGLCRAVTVSLLLLLLSFSFSSACSNGNCQLLDSCSSATDCVSGLYCGDCPAVGRSKPVCTRGQATSPTSIINGLPFNKYTWLMTHNAFSNANAPLLPGVERITFYNQEDTITNQLQNGVRGLMLDMYDFNNDIWLCHSLRGQCFNFTAFQPAINILREVEAFLSQNPTEIVTIIIEDYVHRPKGLSTLFANAGLDKYWFPVSKMPRKGEDWPTVTDMVQENHRLLVFTSVAAKEDEEGVAYQWRYMVENESGDPGVKRGSCPNRKESQPLNSKSSSLFLMNYFPTYPVEKDACKEHSAPLAEMVGTCLKSGGNRMPNFLAVNFYMRSDGGGVFEILDRMNGPVLCGCETLSACQPGAAYGSCKNVTVQTRTPSMDSTAGSNSGGSYSGSVQFSRSLASVAQLNNIVVFCFSLLPLLIFLL.

The signal sequence occupies residues 1-28; sequence MSACINGLCRAVTVSLLLLLLSFSFSSA. In terms of domain architecture, PI-PLC X-box spans 76 to 232; it reads IINGLPFNKY…MVQENHRLLV (157 aa). N-linked (GlcNAc...) asparagine glycans are attached at residues Asn151 and Asn255. The segment at 258–277 is disordered; that stretch reads GDPGVKRGSCPNRKESQPLN. A glycan (N-linked (GlcNAc...) asparagine) is linked at Asn370. A lipid anchor (GPI-anchor amidated serine) is attached at Ser404. The propeptide at 405-426 is removed in mature form; that stretch reads VAQLNNIVVFCFSLLPLLIFLL.

It localises to the cell membrane. The chain is PI-PLC X domain-containing protein At5g67130 from Arabidopsis thaliana (Mouse-ear cress).